Reading from the N-terminus, the 125-residue chain is NADH-ubiquinone oxidoreductase chain 1 (125 aa).

The next 3 helical transmembrane spans lie at 5–25 (IFAF…VAFL), 74–94 (YLFF…WNFM), and 105–125 (LSLL…LGSG).

This sequence belongs to the complex I subunit 1 family.

The protein resides in the mitochondrion inner membrane. The enzyme catalyses a ubiquinone + NADH + 5 H(+)(in) = a ubiquinol + NAD(+) + 4 H(+)(out). Functionally, core subunit of the mitochondrial membrane respiratory chain NADH dehydrogenase (Complex I) that is believed to belong to the minimal assembly required for catalysis. Complex I functions in the transfer of electrons from NADH to the respiratory chain. The immediate electron acceptor for the enzyme is believed to be ubiquinone. This Arbacia lixula (Black urchin) protein is NADH-ubiquinone oxidoreductase chain 1 (ND1).